The chain runs to 571 residues: Hsp70-Hsp90 organizing protein 2 (571 aa).

TPR repeat units follow at residues 2–35 (ADEAKAKGNAAFSSGDFNSAVNHFTDAINLTPTN), 37–69 (VLFSNRSAAHASLNHYDEALSDAKKTVELKPDW), and 70–103 (GKGYSRLGAAHLGLNQFDEAVEAYSKGLEIDPSN). Positions 117-137 (ASRSRASAPNPFGDAFQGPEM) are disordered. Positions 134–173 (GPEMWSKLTADPSTRGLLKQPDFVNMMKEIQRNPSNLNLY) constitute an STI1 1 domain. Position 168 is a phosphoserine (serine 168). A compositionally biased stretch (acidic residues) spans 198-207 (DDMEIGEEEM). The interval 198–245 (DDMEIGEEEMAVPSRKEPEVEKKRKPEPEPEPEPEFGEEKQKKLKAQK) is disordered. 2 stretches are compositionally biased toward basic and acidic residues: residues 211 to 225 (SRKEPEVEKKRKPEP) and 234 to 245 (GEEKQKKLKAQK). The short motif at 240 to 257 (KLKAQKEKELGNAAYKKK) is the Bipartite nuclear localization signal element. TPR repeat units lie at residues 243–276 (AQKEKELGNAAYKKKDFETAIQHYSTAMEIDDED), 278–310 (SYITNRAAVHLEMGKYDECIKDCDKAVERGREL), 322–355 (TRKGTALGKMAKVSKDYEPVIQTYQKALTEHRNP), 382–415 (GDEEREKGNDFFKEQKYPDAVRHYTEAIKRNPKD), 417–449 (RAYSNRAACYTKLGAMPEGLKDAEKCIELDPTF), and 450–483 (LKGYSRKGAVQFFMKEYDNAMETYQKGLEHDPNN). One can recognise an STI1 2 domain in the interval 520–559 (DPEIQNILTDPVMRQVLSDLQENPAAAQKHMQNPMIMNKI).

As to quaternary structure, co-chaperone that forms a complex with HSP70 and HSP90 and preproteins (e.g. chloroplast preproteins). Post-translationally, phosphorylated. In terms of processing, acetylated.

It is found in the cytoplasm. It localises to the nucleus. In terms of biological role, mediates the association of the molecular chaperones HSP70 and HSP90. Mediates nuclear encoded chloroplast preproteins binding to HSP90 prior to chloroplastic sorting. This chain is Hsp70-Hsp90 organizing protein 2 (HOP2), found in Arabidopsis thaliana (Mouse-ear cress).